Reading from the N-terminus, the 265-residue chain is Thiazole synthase (265 aa).

Lys103 (schiff-base intermediate with DXP) is an active-site residue. Residues Gly164, 190-191 (AG), and 212-213 (NT) contribute to the 1-deoxy-D-xylulose 5-phosphate site.

This sequence belongs to the ThiG family. In terms of assembly, homotetramer. Forms heterodimers with either ThiH or ThiS.

The protein localises to the cytoplasm. It catalyses the reaction [ThiS sulfur-carrier protein]-C-terminal-Gly-aminoethanethioate + 2-iminoacetate + 1-deoxy-D-xylulose 5-phosphate = [ThiS sulfur-carrier protein]-C-terminal Gly-Gly + 2-[(2R,5Z)-2-carboxy-4-methylthiazol-5(2H)-ylidene]ethyl phosphate + 2 H2O + H(+). The protein operates within cofactor biosynthesis; thiamine diphosphate biosynthesis. Catalyzes the rearrangement of 1-deoxy-D-xylulose 5-phosphate (DXP) to produce the thiazole phosphate moiety of thiamine. Sulfur is provided by the thiocarboxylate moiety of the carrier protein ThiS. In vitro, sulfur can be provided by H(2)S. The chain is Thiazole synthase from Bordetella avium (strain 197N).